A 505-amino-acid polypeptide reads, in one-letter code: Lysine--tRNA ligase (505 aa).

Glu415 and Glu422 together coordinate Mg(2+).

The protein belongs to the class-II aminoacyl-tRNA synthetase family. As to quaternary structure, homodimer. It depends on Mg(2+) as a cofactor.

It is found in the cytoplasm. It catalyses the reaction tRNA(Lys) + L-lysine + ATP = L-lysyl-tRNA(Lys) + AMP + diphosphate. This is Lysine--tRNA ligase from Shigella boydii serotype 4 (strain Sb227).